Consider the following 185-residue polypeptide: Hypoxanthine/guanine phosphoribosyltransferase (185 aa).

The protein belongs to the purine/pyrimidine phosphoribosyltransferase family. Archaeal HPRT subfamily. In terms of assembly, homodimer.

The protein localises to the cytoplasm. It carries out the reaction IMP + diphosphate = hypoxanthine + 5-phospho-alpha-D-ribose 1-diphosphate. It catalyses the reaction GMP + diphosphate = guanine + 5-phospho-alpha-D-ribose 1-diphosphate. The protein operates within purine metabolism; IMP biosynthesis via salvage pathway; IMP from hypoxanthine: step 1/1. Functionally, catalyzes a salvage reaction resulting in the formation of IMP that is energically less costly than de novo synthesis. The protein is Hypoxanthine/guanine phosphoribosyltransferase of Aciduliprofundum boonei (strain DSM 19572 / T469).